A 511-amino-acid polypeptide reads, in one-letter code: Ribonuclease Y (511 aa).

A helical transmembrane segment spans residues 3–23 (VTIVASIACFIVGGILSYVLF). In terms of domain architecture, KH spans 201 to 261 (SVTVFHIESD…VRREIARLAL (61 aa)). Positions 327–420 (LLQHARETAN…VQVCDAISGA (94 aa)) constitute an HD domain.

Belongs to the RNase Y family.

It localises to the cell membrane. Endoribonuclease that initiates mRNA decay. The chain is Ribonuclease Y from Bacteroides fragilis (strain ATCC 25285 / DSM 2151 / CCUG 4856 / JCM 11019 / LMG 10263 / NCTC 9343 / Onslow / VPI 2553 / EN-2).